We begin with the raw amino-acid sequence, 323 residues long: uncharacterized protein (323 aa).

Transmembrane regions (helical) follow at residues 232–252 (LASYAGILMSGTGFLYMFIVL) and 267–287 (SLIVIQLLFSGIVLLILGVIG).

Belongs to the glycosyltransferase 2 family. GtrB subfamily.

It localises to the cell membrane. This is an uncharacterized protein from Bacillus subtilis (strain 168).